The sequence spans 222 residues: uncharacterized protein (222 aa).

Asparagine 4, asparagine 75, asparagine 84, asparagine 104, asparagine 170, and asparagine 175 each carry an N-linked (GlcNAc...) asparagine; by host glycan. Residues 200-220 (LIIIIGIVIILLLIIVMIKTV) form a helical membrane-spanning segment.

Its subcellular location is the membrane. This is an uncharacterized protein from Acanthamoeba polyphaga (Amoeba).